Consider the following 77-residue polypeptide: Putative regulatory protein tsl2331 (77 aa).

This sequence belongs to the RemA family.

The sequence is that of Putative regulatory protein tsl2331 from Thermosynechococcus vestitus (strain NIES-2133 / IAM M-273 / BP-1).